Consider the following 157-residue polypeptide: Transcription elongation factor GreA (157 aa).

It belongs to the GreA/GreB family.

Its function is as follows. Necessary for efficient RNA polymerase transcription elongation past template-encoded arresting sites. The arresting sites in DNA have the property of trapping a certain fraction of elongating RNA polymerases that pass through, resulting in locked ternary complexes. Cleavage of the nascent transcript by cleavage factors such as GreA or GreB allows the resumption of elongation from the new 3'terminus. GreA releases sequences of 2 to 3 nucleotides. The protein is Transcription elongation factor GreA of Phenylobacterium zucineum (strain HLK1).